The sequence spans 127 residues: UPF0251 protein Ccel_0627 (127 aa).

Belongs to the UPF0251 family.

The chain is UPF0251 protein Ccel_0627 from Ruminiclostridium cellulolyticum (strain ATCC 35319 / DSM 5812 / JCM 6584 / H10) (Clostridium cellulolyticum).